Reading from the N-terminus, the 198-residue chain is dTTP/UTP pyrophosphatase (198 aa).

Asp-75 acts as the Proton acceptor in catalysis.

This sequence belongs to the Maf family. YhdE subfamily. A divalent metal cation serves as cofactor.

The protein resides in the cytoplasm. The catalysed reaction is dTTP + H2O = dTMP + diphosphate + H(+). It carries out the reaction UTP + H2O = UMP + diphosphate + H(+). Nucleoside triphosphate pyrophosphatase that hydrolyzes dTTP and UTP. May have a dual role in cell division arrest and in preventing the incorporation of modified nucleotides into cellular nucleic acids. This Wolbachia sp. subsp. Brugia malayi (strain TRS) protein is dTTP/UTP pyrophosphatase.